The following is a 381-amino-acid chain: MVDQVQHPTIAQKAAGQFMRSSVSKDVQVGYQRPSMYQRHATYGNYSNAAFQFPPTSRMLATTASPVFVQTPGEKGFTNFALDFLMGGVSAAVSKTAAAPIERVKLLIQNQDEMIKAGRLSEPYKGIGDCFGRTIKDEGFGSLWRGNTANVIRYFPTQALNFAFKDYFKRLFNFKKDRDGYWKWFAGNLASGGAAGASSLLFVYSLDYARTRLANDAKAAKKGGGGRQFDGLVDVYRKTLKTDGIAGLYRGFNISCVGIIVYRGLYFGLYDSVKPVLLTGDLQDSFFASFALGWVITNGAGLASYPIDTVRRRMMMTSGEAVKYKSSLDAFKQILKNEGAKSLFKGAGANILRAVAGAGVLSGYDKLQLIVFGKKYGSGGA.

The transit peptide at 1–70 (MVDQVQHPTI…ATTASPVFVQ (70 aa)) directs the protein to the mitochondrion. 3 Solcar repeats span residues 78–171 (TNFA…FKRL), 183–276 (KWFA…VKPV), and 284–370 (DSFF…LQLI). 5 consecutive transmembrane segments (helical) span residues 80–107 (FALD…VKLL), 148–172 (TANV…KRLF), 181–201 (YWKW…SSLL), 252–273 (FNIS…YDSV), and 287–307 (FASF…SYPI). 2 residues coordinate ADP: arginine 153 and lysine 165. An ADP-binding site is contributed by arginine 311. Positions 311–316 (RRRMMM) are important for transport activity. The Nucleotide carrier signature motif motif lies at 311–316 (RRRMMM). Residues 347–367 (AGANILRAVAGAGVLSGYDKL) form a helical membrane-spanning segment.

The protein belongs to the mitochondrial carrier (TC 2.A.29) family. As to quaternary structure, monomer.

It is found in the mitochondrion inner membrane. The catalysed reaction is ADP(in) + ATP(out) = ADP(out) + ATP(in). The matrix-open state (m-state) is inhibited by the membrane-permeable bongkrekic acid (BKA). The cytoplasmic-open state (c-state) is inhibited by the membrane-impermeable toxic inhibitor carboxyatractyloside (CATR). In terms of biological role, ADP:ATP antiporter that mediates import of ADP into the mitochondrial matrix for ATP synthesis, and export of ATP out to fuel the cell. Cycles between the cytoplasmic-open state (c-state) and the matrix-open state (m-state): operates by the alternating access mechanism with a single substrate-binding site intermittently exposed to either the cytosolic (c-state) or matrix (m-state) side of the inner mitochondrial membrane. In Arabidopsis thaliana (Mouse-ear cress), this protein is ADP,ATP carrier protein 1, mitochondrial (AAC1).